The following is a 961-amino-acid chain: MTDIEALKAITTESIDLENVPVEEVFQHLKCTKEGLTSNEVQERLTLFGYNKLEEKKESKILKFLGFMWNPLSWVMEAAALMAIGLAHGGGKPADYHDFVGIVVLLLINSTISFVEENNAGNAAAALMAQLAPKAKAVRDGKWNEIDAAELVPGDIVSIKLGDIIPADARLLEGDPLKIDQATLTGESLPVTKNPGASVYSGSTCKQGEIEAVVIATGVHTFFGKAAHLVDSTTHVGHFQKVLTAIGNFCICSIAVGMAIEIVVIYGLQKRGYRVGIDNLLVLLIGGIPIAMPTVLSVTMAIGAHRLAQQGAITKRMTAIEEMAGMDVLCSDKTGTLTLNKLSVDKNLIEVFKRGIDRDMAVLMAARAARLENQDAIDTAIVSMLSDPKEARAGIKELHFLPFSPANRRTALTYLDGEGKMHRVSKGAPEEILDMAHNKLEIKEKVHATIDKFAERGLRSLGLAYQEVPDGDVKGEGGPWDFVALLPLFDPPRHDSAQTIERALHLGVSVKMITGDQLAIAKETGRRLGMGTNMYPSSSLLSDNNTEGVSVDELIENADGFAGVFPEHKYEIVKRLQSRKHICGMTGDGVNDAPALKKADIGIAVDDATDAARGASDIVLTEPGLSVIISAVLTSRAIFQRMKNYTIYAVSITIRIVMGFMLLCVFWEFDFPPFMVLVIAILNDGTIMTISKDRVKPSPTPDCWKLKEIFATGVVLGAYLAIMTVVFFWAAYETNFFHNIFHVRNFNQHHFKMKDKKVAAHLNEQMASAVYLQVSTISQALIFVTRSRSWSFVERPGFLLVIAFLIAQLVASVISAMANWPFAGIRSIGWGWTGVIWIFNIVTYMLLDPIKFLVRYALSGKSWDRMVEGRTALTGKKNFGQEERMAAWATEKRTQHGLETGQKPVYERNSATELNNMAEEAKRRAEIARMRELQTLKGKVESAAKLKGYDLEDPNSNNYTI.

The Cytoplasmic segment spans residues 1 to 64; that stretch reads MTDIEALKAI…EKKESKILKF (64 aa). A helical transmembrane segment spans residues 65–84; it reads LGFMWNPLSWVMEAAALMAI. Residues 85–96 are Extracellular-facing; sequence GLAHGGGKPADY. A helical transmembrane segment spans residues 97–117; it reads HDFVGIVVLLLINSTISFVEE. Residues 118–246 are Cytoplasmic-facing; it reads NNAGNAAAAL…GHFQKVLTAI (129 aa). The helical transmembrane segment at 247–267 threads the bilayer; that stretch reads GNFCICSIAVGMAIEIVVIYG. Residues 268-276 lie on the Extracellular side of the membrane; sequence LQKRGYRVG. Residues 277–294 traverse the membrane as a helical segment; sequence IDNLLVLLIGGIPIAMPT. Residues 295 to 643 lie on the Cytoplasmic side of the membrane; it reads VLSVTMAIGA…TSRAIFQRMK (349 aa). The active-site 4-aspartylphosphate intermediate is Asp332. Mg(2+) contacts are provided by Asp588 and Asp592. The chain crosses the membrane as a helical span at residues 644 to 665; it reads NYTIYAVSITIRIVMGFMLLCV. Residues 666 to 670 are Extracellular-facing; the sequence is FWEFD. The helical transmembrane segment at 671-693 threads the bilayer; it reads FPPFMVLVIAILNDGTIMTISKD. At 694–709 the chain is on the cytoplasmic side; that stretch reads RVKPSPTPDCWKLKEI. The chain crosses the membrane as a helical span at residues 710–730; the sequence is FATGVVLGAYLAIMTVVFFWA. The Extracellular segment spans residues 731–764; the sequence is AYETNFFHNIFHVRNFNQHHFKMKDKKVAAHLNE. The chain crosses the membrane as a helical span at residues 765–785; the sequence is QMASAVYLQVSTISQALIFVT. Residues 786–797 lie on the Cytoplasmic side of the membrane; it reads RSRSWSFVERPG. The chain crosses the membrane as a helical span at residues 798–818; it reads FLLVIAFLIAQLVASVISAMA. At 819–826 the chain is on the extracellular side; the sequence is NWPFAGIR. Residues 827 to 847 form a helical membrane-spanning segment; sequence SIGWGWTGVIWIFNIVTYMLL. The Cytoplasmic portion of the chain corresponds to 848-961; it reads DPIKFLVRYA…EDPNSNNYTI (114 aa). At Thr894 the chain carries Phosphothreonine. 2 positions are modified to phosphoserine: Ser910 and Ser942. The segment at 959-961 is interaction with 14-3-3 proteins; the sequence is YTI. Thr960 carries the phosphothreonine modification.

This sequence belongs to the cation transport ATPase (P-type) (TC 3.A.3) family. Type IIIA subfamily. In terms of assembly, binds to 14-3-3 proteins. The binding is induced by phosphorylation of Thr-960. Binding to 14-3-3 proteins activates the H(+)-ATPase. Expressed in guard cells, roots and leaves, and barely in mesophyll cells.

It is found in the membrane. The enzyme catalyses ATP + H2O + H(+)(in) = ADP + phosphate + 2 H(+)(out). Its function is as follows. The plasma membrane H(+) ATPase of plants and fungi generates a proton gradient that drives the active transport of nutrients by H(+)-symport. The resulting external acidification and/or internal alkinization may mediate growth responses. The sequence is that of ATPase 7, plasma membrane-type (AHA7) from Arabidopsis thaliana (Mouse-ear cress).